We begin with the raw amino-acid sequence, 103 residues long: Histone H4 (103 aa).

Residues 1–14 (MTGRGKGGKGLGKG) show a composition bias toward gly residues. The interval 1–20 (MTGRGKGGKGLGKGGAKRHR) is disordered. An N-acetylthreonine modification is found at threonine 2. The residue at position 6 (lysine 6) is an N6-acetyl-N6-methyllysine; alternate. An N6-acetyllysine mark is found at lysine 6, lysine 9, lysine 13, and lysine 17. Residue lysine 13 is modified to N6-acetyl-N6-methyllysine; alternate. Lysine 21 is modified (N6,N6-dimethyllysine). At lysine 32 the chain carries N6-methyllysine.

It belongs to the histone H4 family. The nucleosome is a histone octamer containing two molecules each of H2A, H2B, H3 and H4 assembled in one H3-H4 heterotetramer and two H2A-H2B heterodimers. The octamer wraps approximately 147 bp of DNA.

The protein resides in the nucleus. It is found in the chromosome. Functionally, core component of nucleosome. Nucleosomes wrap and compact DNA into chromatin, limiting DNA accessibility to the cellular machineries which require DNA as a template. Histones thereby play a central role in transcription regulation, DNA repair, DNA replication and chromosomal stability. DNA accessibility is regulated via a complex set of post-translational modifications of histones, also called histone code, and nucleosome remodeling. Its function is as follows. A mixture of histones H2B and H4 has antimicrobial activity against the Gram-positive bacterium M.luteus. This chain is Histone H4, found in Penaeus vannamei (Whiteleg shrimp).